Reading from the N-terminus, the 253-residue chain is Probable proteasome subunit alpha type-7 (253 aa).

Position 104 is a phosphoserine (Ser104).

Belongs to the peptidase T1A family. In terms of assembly, the 26S proteasome consists of a 20S proteasome core and two 19S regulatory subunits. The 20S proteasome core is composed of 28 subunits that are arranged in four stacked rings, resulting in a barrel-shaped structure. The two end rings are each formed by seven alpha subunits, and the two central rings are each formed by seven beta subunits. The catalytic chamber with the active sites is on the inside of the barrel.

The protein localises to the cytoplasm. The protein resides in the nucleus. Functionally, the proteasome is a multicatalytic proteinase complex which is characterized by its ability to cleave peptides with Arg, Phe, Tyr, Leu, and Glu adjacent to the leaving group at neutral or slightly basic pH. The proteasome has an ATP-dependent proteolytic activity. In Schizosaccharomyces pombe (strain 972 / ATCC 24843) (Fission yeast), this protein is Probable proteasome subunit alpha type-7 (pre10).